A 165-amino-acid chain; its full sequence is Destrin (165 aa).

An N-acetylalanine modification is found at A2. S3 carries the post-translational modification Phosphoserine. Positions 4–153 (GVQVADEVCR…NRTCIAEKLG (150 aa)) constitute an ADF-H domain. Position 19 is an N6-acetyllysine (K19). The Nuclear localization signal motif lies at 30–34 (KKRKK).

The protein belongs to the actin-binding proteins ADF family. In terms of processing, ISGylated. Widely expressed. Not found in skeletal muscle.

Actin-depolymerizing protein. Severs actin filaments (F-actin) and binds to actin monomers (G-actin). Acts in a pH-independent manner. In Mus musculus (Mouse), this protein is Destrin (Dstn).